A 704-amino-acid chain; its full sequence is Polyribonucleotide nucleotidyltransferase (704 aa).

Mg(2+) is bound by residues Asp485 and Asp491. The KH domain occupies 552–611 (PKTETIQIDPDKIRSVIGAGGKVINKIIQDTGVKIDIKEDGSVFVSSSDHAGVKEAIKII). The S1 motif domain occupies 621-689 (GEIYLGKVTK…SQGRINLSRK (69 aa)).

The protein belongs to the polyribonucleotide nucleotidyltransferase family. The cofactor is Mg(2+).

It localises to the cytoplasm. The enzyme catalyses RNA(n+1) + phosphate = RNA(n) + a ribonucleoside 5'-diphosphate. Involved in mRNA degradation. Catalyzes the phosphorolysis of single-stranded polyribonucleotides processively in the 3'- to 5'-direction. The polypeptide is Polyribonucleotide nucleotidyltransferase (Clostridium botulinum (strain Eklund 17B / Type B)).